The sequence spans 230 residues: Ribonuclease 3 (230 aa).

The region spanning 1–134 is the RNase III domain; that stretch reads MKQLEELLST…FLGALLLDKG (134 aa). E47 lines the Mg(2+) pocket. Residue D51 is part of the active site. Mg(2+)-binding residues include D120 and E123. E123 is an active-site residue. The 70-residue stretch at 160–229 folds into the DRBM domain; it reads DYKTCLQEFL…AKNALAQLSE (70 aa).

Belongs to the ribonuclease III family. In terms of assembly, homodimer. Mg(2+) serves as cofactor.

It is found in the cytoplasm. It catalyses the reaction Endonucleolytic cleavage to 5'-phosphomonoester.. Functionally, digests double-stranded RNA. Involved in the processing of primary rRNA transcript to yield the immediate precursors to the large and small rRNAs (23S and 16S). Processes some mRNAs, and tRNAs when they are encoded in the rRNA operon. Processes pre-crRNA and tracrRNA of type II CRISPR loci if present in the organism. The chain is Ribonuclease 3 from Streptococcus pyogenes serotype M2 (strain MGAS10270).